The following is a 343-amino-acid chain: Small ribosomal subunit biogenesis GTPase RsgA (343 aa).

Positions 116–275 (RGQLKPVAAN…LIDSPGIREF (160 aa)) constitute a CP-type G domain. GTP-binding positions include 163–166 (NKAD) and 217–225 (GQSGVGKSS). Residues C299, C304, H306, and C312 each coordinate Zn(2+).

Belongs to the TRAFAC class YlqF/YawG GTPase family. RsgA subfamily. In terms of assembly, monomer. Associates with 30S ribosomal subunit, binds 16S rRNA. Zn(2+) serves as cofactor.

Its subcellular location is the cytoplasm. Functionally, one of several proteins that assist in the late maturation steps of the functional core of the 30S ribosomal subunit. Helps release RbfA from mature subunits. May play a role in the assembly of ribosomal proteins into the subunit. Circularly permuted GTPase that catalyzes slow GTP hydrolysis, GTPase activity is stimulated by the 30S ribosomal subunit. This is Small ribosomal subunit biogenesis GTPase RsgA from Azotobacter vinelandii (strain DJ / ATCC BAA-1303).